We begin with the raw amino-acid sequence, 673 residues long: Probable potassium transport system protein Kup 1 (673 aa).

Transmembrane regions (helical) follow at residues 14-34 (GAGF…SPLY), 58-78 (LSLI…WIAL), 101-121 (WLII…ALTP), 147-167 (LPIV…QRFG), 175-195 (FGPV…INLF), 196-216 (GDFS…LLSP), 220-240 (AGIF…ALYS), 252-272 (VSWP…AAWL), 294-314 (LIIF…QALI), 345-365 (LYIP…VVYF), 374-394 (AYGL…TVYL), 403-423 (VFVV…FAAS), and 427-447 (FLHG…VMAI).

This sequence belongs to the HAK/KUP transporter (TC 2.A.72) family.

The protein resides in the cell membrane. The catalysed reaction is K(+)(in) + H(+)(in) = K(+)(out) + H(+)(out). Its function is as follows. Transport of potassium into the cell. Likely operates as a K(+):H(+) symporter. In Lactococcus lactis subsp. cremoris (strain SK11), this protein is Probable potassium transport system protein Kup 1.